Here is a 297-residue protein sequence, read N- to C-terminus: Large ribosomal subunit protein uL18 (297 aa).

Gly-2 is modified (N-acetylglycine). An N6-acetyllysine mark is found at Lys-5 and Lys-48. Position 185 is a phosphoserine (Ser-185). N6-acetyllysine; alternate is present on Lys-220. Residue Lys-220 forms a Glycyl lysine isopeptide (Lys-Gly) (interchain with G-Cter in SUMO1); alternate linkage. A Glycyl lysine isopeptide (Lys-Gly) (interchain with G-Cter in SUMO2); alternate cross-link involves residue Lys-220. Thr-232 bears the Phosphothreonine mark. A disordered region spans residues 252-297 (VYEKKPKKEVKKKRWNRPKMSLAQKKDRVAQKKASFLRAQERAAES). Positions 258–268 (KKEVKKKRWNR) are enriched in basic residues. Phosphoserine is present on Ser-272.

Belongs to the universal ribosomal protein uL18 family. In terms of assembly, component of the large ribosomal subunit (LSU). Part of the 5S RNP complex, which is a LSU subcomplex composed of the 5S RNA, RPL5 and RPL11. Component of a hexameric 5S RNP precursor complex, composed of 5S RNA, RRS1, RPF2/BXDC1, RPL5, RPL11 and HEATR3; this complex acts as a precursor for ribosome assembly. Interacts with NVL in an ATP-dependent manner. Interacts with RRP1B. Interacts with IPO5, IPO7 and KPNB1; these interactions may be involved in RPL5 nuclear import for the assembly of ribosomal subunits.

It is found in the cytoplasm. It localises to the nucleus. The protein resides in the nucleolus. Functionally, component of the ribosome, a large ribonucleoprotein complex responsible for the synthesis of proteins in the cell. The small ribosomal subunit (SSU) binds messenger RNAs (mRNAs) and translates the encoded message by selecting cognate aminoacyl-transfer RNA (tRNA) molecules. The large subunit (LSU) contains the ribosomal catalytic site termed the peptidyl transferase center (PTC), which catalyzes the formation of peptide bonds, thereby polymerizing the amino acids delivered by tRNAs into a polypeptide chain. The nascent polypeptides leave the ribosome through a tunnel in the LSU and interact with protein factors that function in enzymatic processing, targeting, and the membrane insertion of nascent chains at the exit of the ribosomal tunnel. As part of the 5S RNP/5S ribonucleoprotein particle it is an essential component of the LSU, required for its formation and the maturation of rRNAs. It also couples ribosome biogenesis to p53/TP53 activation. As part of the 5S RNP it accumulates in the nucleoplasm and inhibits MDM2, when ribosome biogenesis is perturbed, mediating the stabilization and the activation of TP53. The chain is Large ribosomal subunit protein uL18 (RPL5) from Bos taurus (Bovine).